Consider the following 493-residue polypeptide: Zinc finger CCCH domain-containing protein 34 (493 aa).

3 consecutive C3H1-type zinc fingers follow at residues 14-43, 45-71, and 91-118; these read RRCNTDCVYFLASPFTCTKGSKCEYRHADG, RFNRRNCWYWFKGNCVNPSCTFRHPPL, and VKAANPCYFYYNSHCSKGDNCPYLHEPL. Residues 397 to 477 are disordered; it reads MGECPQPANH…SFSDDFEGPK (81 aa). The span at 409–420 shows a compositional bias: basic residues; sequence FRGRRKKNRGKQ. The span at 452–468 shows a compositional bias: polar residues; that stretch reads SNSSFSHSTACTPNVRS.

The sequence is that of Zinc finger CCCH domain-containing protein 34 from Oryza sativa subsp. japonica (Rice).